Here is a 681-residue protein sequence, read N- to C-terminus: Proline dehydrogenase 1, mitochondrial (681 aa).

The N-terminal 30 residues, Met-1–Ala-30, are a transit peptide targeting the mitochondrion. Polar residues predominate over residues Ser-76 to Glu-87. Disordered stretches follow at residues Ser-76–Pro-113 and Glu-216–Met-239. Residues Thr-88–Gln-99 are compositionally biased toward basic and acidic residues.

It belongs to the proline oxidase family. FAD is required as a cofactor. In terms of tissue distribution, most abundant in developing nervous system.

The protein localises to the mitochondrion matrix. It catalyses the reaction L-proline + a quinone = (S)-1-pyrroline-5-carboxylate + a quinol + H(+). The protein operates within amino-acid degradation; L-proline degradation into L-glutamate; L-glutamate from L-proline: step 1/2. Converts proline to delta-1-pyrroline-5-carboxylate. Involved in the conversion of proline to glutamate, which functions as a transmitter at neuromuscular junctions. Glutamate deficiency could possibly account for reduced motor activity. This chain is Proline dehydrogenase 1, mitochondrial (slgA), found in Drosophila melanogaster (Fruit fly).